A 139-amino-acid polypeptide reads, in one-letter code: Nucleoside diphosphate kinase (139 aa).

6 residues coordinate ATP: Lys11, Phe59, Arg87, Thr93, Arg104, and Asn114. The active-site Pros-phosphohistidine intermediate is the His117.

It belongs to the NDK family. Homotetramer. Mg(2+) serves as cofactor.

Its subcellular location is the cytoplasm. It carries out the reaction a 2'-deoxyribonucleoside 5'-diphosphate + ATP = a 2'-deoxyribonucleoside 5'-triphosphate + ADP. The catalysed reaction is a ribonucleoside 5'-diphosphate + ATP = a ribonucleoside 5'-triphosphate + ADP. Its function is as follows. Major role in the synthesis of nucleoside triphosphates other than ATP. The ATP gamma phosphate is transferred to the NDP beta phosphate via a ping-pong mechanism, using a phosphorylated active-site intermediate. This Wolbachia pipientis subsp. Culex pipiens (strain wPip) protein is Nucleoside diphosphate kinase.